A 378-amino-acid polypeptide reads, in one-letter code: Cytochrome b (378 aa).

4 helical membrane passes run 33 to 53 (FGSL…FLAM), 77 to 98 (WLIR…YLHI), 113 to 133 (WNTG…GYVL), and 178 to 198 (FFAF…LHFL). Residues H83 and H97 each contribute to the heme b site. The heme b site is built by H182 and H196. Position 201 (H201) interacts with a ubiquinone. 4 helical membrane-spanning segments follow: residues 226–246 (YKDL…AVFS), 288–308 (LGGV…PFLH), 320–340 (WSQL…WIGG), and 347–367 (LTTV…FLMP).

This sequence belongs to the cytochrome b family. As to quaternary structure, the cytochrome bc1 complex contains 3 respiratory subunits (MT-CYB, CYC1 and UQCRFS1), 2 core proteins (UQCRC1 and UQCRC2) and probably 6 low-molecular weight proteins. Heme b serves as cofactor.

It is found in the mitochondrion inner membrane. In terms of biological role, component of the ubiquinol-cytochrome c reductase complex (complex III or cytochrome b-c1 complex) that is part of the mitochondrial respiratory chain. The b-c1 complex mediates electron transfer from ubiquinol to cytochrome c. Contributes to the generation of a proton gradient across the mitochondrial membrane that is then used for ATP synthesis. In Indostomus paradoxus (Armoured stickleback), this protein is Cytochrome b (mt-cyb).